The sequence spans 313 residues: Adhesin MafA 2/3 (313 aa).

A signal peptide spans 1–14 (MKTLLLLIPLVLTA). Cysteine 15 is lipidated: N-palmitoyl cysteine. Cysteine 15 carries S-diacylglycerol cysteine lipidation. Polar residues predominate over residues 282–298 (GDTTAQNRPDFKQNNGK). The segment at 282-313 (GDTTAQNRPDFKQNNGKNPDVGNEVIRRRKGG) is disordered.

It belongs to the MafA family.

Its subcellular location is the cell outer membrane. The chain is Adhesin MafA 2/3 (mafA2) from Neisseria gonorrhoeae (strain ATCC 700825 / FA 1090).